We begin with the raw amino-acid sequence, 32 residues long: Variegin (32 aa).

The segment at 1–32 is disordered; sequence SDQGDVAEPKMHKTAPPFDFEAIPEEYLDDES. The segment at 8 to 14 is contains the active site; the sequence is EPKMHKT. Thr14 is a glycosylation site (O-linked (Hex) threonine). A compositionally biased stretch (acidic residues) spans 22–32; the sequence is AIPEEYLDDES.

In terms of assembly, interacts with human F2 (thrombin); the interaction results in thrombin inhibition.

Its subcellular location is the secreted. Thrombin inhibitor. Does not inhibit other serine proteases. This Amblyomma variegatum (Tropical bont tick) protein is Variegin.